The chain runs to 614 residues: Asparagine synthetase [glutamine-hydrolyzing] 3 (614 aa).

Cys-2 (for GATase activity) is an active-site residue. In terms of domain architecture, Glutamine amidotransferase type-2 spans Cys-2 to Asp-216. L-glutamine contacts are provided by residues Arg-50–Val-54, Asn-77–Glu-79, and Asp-102. ATP is bound at residue Ser-377–Gly-378.

The protein belongs to the asparagine synthetase family.

The catalysed reaction is L-aspartate + L-glutamine + ATP + H2O = L-asparagine + L-glutamate + AMP + diphosphate + H(+). It functions in the pathway amino-acid biosynthesis; L-asparagine biosynthesis; L-asparagine from L-aspartate (L-Gln route): step 1/1. Asparagine synthetase involved in sporulation. This is Asparagine synthetase [glutamine-hydrolyzing] 3 (asnO) from Bacillus subtilis (strain 168).